Consider the following 300-residue polypeptide: Acetyl-coenzyme A carboxylase carboxyl transferase subunit beta 2 (300 aa).

A CoA carboxyltransferase N-terminal domain is found at 26-294; sequence VWVKCPSCRE…SGAYSSEAVA (269 aa). Residues C30, C33, C49, and C51 each contribute to the Zn(2+) site. The segment at 30 to 51 adopts a C4-type zinc-finger fold; that stretch reads CPSCRELIYHKQLAERMKVCRC.

The protein belongs to the AccD/PCCB family. As to quaternary structure, acetyl-CoA carboxylase is a heterohexamer composed of biotin carboxyl carrier protein (AccB), biotin carboxylase (AccC) and two subunits each of ACCase subunit alpha (AccA) and ACCase subunit beta (AccD). Zn(2+) serves as cofactor.

It localises to the cytoplasm. The catalysed reaction is N(6)-carboxybiotinyl-L-lysyl-[protein] + acetyl-CoA = N(6)-biotinyl-L-lysyl-[protein] + malonyl-CoA. Its pathway is lipid metabolism; malonyl-CoA biosynthesis; malonyl-CoA from acetyl-CoA: step 1/1. In terms of biological role, component of the acetyl coenzyme A carboxylase (ACC) complex. Biotin carboxylase (BC) catalyzes the carboxylation of biotin on its carrier protein (BCCP) and then the CO(2) group is transferred by the transcarboxylase to acetyl-CoA to form malonyl-CoA. The protein is Acetyl-coenzyme A carboxylase carboxyl transferase subunit beta 2 of Roseiflexus castenholzii (strain DSM 13941 / HLO8).